Here is a 283-residue protein sequence, read N- to C-terminus: 4-diphosphocytidyl-2-C-methyl-D-erythritol kinase (283 aa).

Lysine 10 is a catalytic residue. 95–105 (PVAAGLGGGSS) contacts ATP. Aspartate 137 is a catalytic residue.

This sequence belongs to the GHMP kinase family. IspE subfamily.

It catalyses the reaction 4-CDP-2-C-methyl-D-erythritol + ATP = 4-CDP-2-C-methyl-D-erythritol 2-phosphate + ADP + H(+). It participates in isoprenoid biosynthesis; isopentenyl diphosphate biosynthesis via DXP pathway; isopentenyl diphosphate from 1-deoxy-D-xylulose 5-phosphate: step 3/6. In terms of biological role, catalyzes the phosphorylation of the position 2 hydroxy group of 4-diphosphocytidyl-2C-methyl-D-erythritol. This Limosilactobacillus fermentum (strain NBRC 3956 / LMG 18251) (Lactobacillus fermentum) protein is 4-diphosphocytidyl-2-C-methyl-D-erythritol kinase.